Consider the following 766-residue polypeptide: Slit homolog 2 protein (766 aa).

An N-terminal signal peptide occupies residues 1 to 30 (MSGIGWQTLSLSLALVLSILNKVAPHACPA). An LRRNT domain is found at 31-55 (QCSCSGSTVDCHGLALRIVPRNIPR). LRR repeat units follow at residues 56 to 77 (NTER…DFAG), 80 to 101 (HLRI…AFHD), 104 to 125 (ELER…LFLG), 128 to 149 (KLYR…AFRG), 152 to 173 (DIKN…AFRA), and 176 to 197 (DLEV…SFNH). N-linked (GlcNAc...) asparagine glycosylation occurs at asparagine 66. N-linked (GlcNAc...) asparagine glycosylation is present at asparagine 186. One can recognise an LRRCT 1 domain in the interval 209-259 (NNLYCDCHLAWLSDWLRQRPRVGLYTQCMGPSHLRGHNVAEVQKREFVCSD). The LRRNT 2 domain maps to 268–304 (MAPSCSVLHCPIACTCSNNIVDCRGKGLTEIPTNLPE). A disulfide bridge links cysteine 281 with cysteine 290. 5 LRR repeats span residues 305–326 (TITE…AFSP), 329–350 (KLRR…AFQG), 353–374 (SLNS…LFEG), 377–398 (SLQL…AFQD), and 401–422 (NLNL…TFSA). In terms of domain architecture, LRRCT 2 spans 434-484 (NPFICDCHLKWLADYLHTNPIETSGARCTSPRRLANKRIGQIKSKKFRCSG). 4 disulfides stabilise this stretch: cysteine 438-cysteine 461, cysteine 440-cysteine 482, cysteine 502-cysteine 508, and cysteine 506-cysteine 515. Residues 493-529 (SGDCFADLACPEKCRCEGTTVDCSNQKLNKIPDHIPQ) enclose the LRRNT 3 domain. LRR repeat units lie at residues 530-551 (YTAE…GIFK), 555-576 (QLRK…AFEG), 579-600 (GVNE…MFKG), 603-624 (SLKT…SFTG), and 627-648 (SVRL…AFGT). Residue asparagine 560 is glycosylated (N-linked (GlcNAc...) asparagine). A glycan (N-linked (GlcNAc...) asparagine) is linked at asparagine 619. The LRRCT 3 domain occupies 660–710 (NPFNCNCHLAWLGEWLRRKRIVTGNPRCQKPYFLKEIPIQDVAIQDFTCDD). Cystine bridges form between cysteine 664–cysteine 687, cysteine 666–cysteine 708, cysteine 723–cysteine 729, and cysteine 727–cysteine 736. The region spanning 714–750 (DNSCSPLSRCPSECTCLDTVVRCSNKGLKVLPKGIPR) is the LRRNT 4 domain.

Homodimer. Binds ROBO1 and ROBO2 with high affinity. Interacts with GREM1.

The protein resides in the secreted. Thought to act as molecular guidance cue in cellular migration, and function appears to be mediated by interaction with roundabout homolog receptors. During neural development involved in axonal navigation at the ventral midline of the neural tube and projection of axons to different regions. SLIT1 and SLIT2 seem to be essential for midline guidance in the forebrain by acting as repulsive signal preventing inappropriate midline crossing by axons projecting from the olfactory bulb. In spinal cord development may play a role in guiding commissural axons once they reached the floor plate by modulating the response to netrin. In vitro, silences the attractive effect of NTN1 but not its growth-stimulatory effect and silencing requires the formation of a ROBO1-DCC complex. May be implicated in spinal cord midline post-crossing axon repulsion. In vitro, only commissural axons that crossed the midline responded to SLIT2. In the developing visual system appears to function as repellent for retinal ganglion axons by providing a repulsion that directs these axons along their appropriate paths prior to, and after passage through, the optic chiasm. In vitro, collapses and repels retinal ganglion cell growth cones. Seems to play a role in branching and arborization of CNS sensory axons, and in neuronal cell migration. Seems to be involved in regulating leukocyte migration. The chain is Slit homolog 2 protein (Slit2) from Rattus norvegicus (Rat).